The sequence spans 2193 residues: Genome polyprotein (2193 aa).

Residues 1–22 (MGSQVSTQRSGSHENSNSATEG) are disordered. Residue G2 is the site of N-myristoyl glycine; by host attachment. Over 2 to 1503 (GSQVSTQRSG…HLNRAVLVMQ (1502 aa)) the chain is Cytoplasmic. Amphipathic alpha-helix regions lie at residues 566 to 588 (GDRV…LTPA) and 568 to 588 (RVAD…LTPA). Residues H883 and D901 each act as for protease 2A activity in the active site. The Zn(2+) site is built by C918 and C920. C972 functions as the For protease 2A activity in the catalytic mechanism. Zn(2+)-binding residues include C978 and H980. The segment at 1112–1184 (SASWLKKFND…EQSAASQEDL (73 aa)) is membrane-binding. Residues 1112-1250 (SASWLKKFND…SPGTGKSLAT (139 aa)) are oligomerization. The interval 1133 to 1137 (FNKIS) is RNA-binding. The 159-residue stretch at 1216–1374 (EKRMNNYMQF…YKTDLGRLDA (159 aa)) folds into the SF3 helicase domain. 1240-1247 (GSPGTGKS) lines the ATP pocket. C1381, C1392, and C1397 together coordinate Zn(2+). A C4-type; degenerate zinc finger spans residues 1381 to 1397 (CTENNTANFKRCSPLVC). An RNA-binding region spans residues 1424-1431 (EYNNRSAI). Residues 1435–1440 (IEALFQ) form an oligomerization region. An intramembrane segment occupies 1504 to 1519 (SIATVVAVVSLVYVIY). The Cytoplasmic portion of the chain corresponds to 1520 to 2193 (KLFAGFQGAY…NLRRNWLELF (674 aa)). At Y1529 the chain carries O-(5'-phospho-RNA)-tyrosine. In terms of domain architecture, Peptidase C3 spans 1549–1727 (GPSLDFALSL…FCAGLKRSYF (179 aa)). Catalysis depends on for protease 3C activity residues H1588, E1619, and C1695. In terms of domain architecture, RdRp catalytic spans 1958 to 2073 (GSLFAFDYSG…ASYPFPIDCL (116 aa)). Mg(2+)-binding residues include D1964 and D2060.

It belongs to the picornaviruses polyprotein family. As to quaternary structure, interacts with capsid protein VP1 and capsid protein VP3 to form heterotrimeric protomers. Interacts with capsid protein VP0, and capsid protein VP3 to form heterotrimeric protomers. Five protomers subsequently associate to form pentamers which serve as building blocks for the capsid. Interacts with capsid protein VP2, capsid protein VP3 and capsid protein VP4 following cleavage of capsid protein VP0. Interacts with host SCARB2. Interacts with host ARF6; this interaction mediates viral endocytosis. In terms of assembly, interacts with capsid protein VP1 and capsid protein VP3 in the mature capsid. Interacts with host SCARB2. As to quaternary structure, interacts with capsid protein VP0 and capsid protein VP1 to form heterotrimeric protomers. Five protomers subsequently associate to form pentamers which serve as building blocks for the capsid. Interacts with capsid protein VP4 in the mature capsid. Interacts with protein 2C; this interaction may be important for virion morphogenesis. Interacts with capsid protein VP1 and capsid protein VP3. In terms of assembly, homodimer. Interacts with host SPOP; this interaction promotes protease 2A ubiquitination and subsequent degradation. As to quaternary structure, interacts with host BAX; this interaction activates the mitochondrial apoptotic pathway. Interacts with host ILF2. Homohexamer; forms a hexameric ring structure with 6-fold symmetry characteristic of AAA+ ATPases. Interacts (via N-terminus) with host RTN3 (via reticulon domain); this interaction is important for viral replication. Interacts with capsid protein VP3; this interaction may be important for virion morphogenesis. In terms of assembly, interacts with protein 3CD. As to quaternary structure, homodimer. Interacts with host GBF1. Interacts (via GOLD domain) with host ACBD3 (via GOLD domain); this interaction allows the formation of a viral protein 3A/ACBD3 heterotetramer with a 2:2 stoichiometry, which will stimulate the recruitment of host PI4KB in order to synthesize PI4P at the viral RNA replication sites. Interacts with RNA-directed RNA polymerase. In terms of assembly, interacts with host IFIH1/MDA5; this interaction inhibits host IFIH1. Interacts with host RIGI. As to quaternary structure, interacts with protein 3AB and with RNA-directed RNA polymerase. Interacts with host PPP1R15A. Interacts with Viral protein genome-linked and with protein 3CD. Interacts with host NLRP3. Mg(2+) is required as a cofactor. Specific enzymatic cleavages in vivo by the viral proteases yield processing intermediates and the mature proteins. Post-translationally, myristoylation is required for the formation of pentamers during virus assembly. Further assembly of 12 pentamers and a molecule of genomic RNA generates the provirion. In terms of processing, during virion maturation, immature virions are rendered infectious following cleavage of VP0 into VP4 and VP2. This maturation seems to be an autocatalytic event triggered by the presence of RNA in the capsid and it is followed by a conformational change infectious virion. Myristoylation is required during RNA encapsidation and formation of the mature virus particle. Post-translationally, VPg is uridylylated by the polymerase into VPg-pUpU. This acts as a nucleotide-peptide primer for the genomic RNA replication.

It is found in the virion. The protein resides in the host cytoplasm. Its subcellular location is the host cytoplasmic vesicle membrane. It localises to the host nucleus. It carries out the reaction a ribonucleoside 5'-triphosphate + H2O = a ribonucleoside 5'-diphosphate + phosphate + H(+). The catalysed reaction is Selective cleavage of Tyr-|-Gly bond in the picornavirus polyprotein.. It catalyses the reaction RNA(n) + a ribonucleoside 5'-triphosphate = RNA(n+1) + diphosphate. The enzyme catalyses Selective cleavage of Gln-|-Gly bond in the poliovirus polyprotein. In other picornavirus reactions Glu may be substituted for Gln, and Ser or Thr for Gly.. With respect to regulation, replication or transcription is subject to high level of random mutations by the nucleotide analog ribavirin. In terms of biological role, forms an icosahedral capsid of pseudo T=3 symmetry with capsid proteins VP2 and VP3. The capsid is 300 Angstroms in diameter, composed of 60 copies of each capsid protein and enclosing the viral positive strand RNA genome. Capsid protein VP1 mainly forms the vertices of the capsid. Capsid protein VP1, together with VP2, interacts with host cell receptor SCARB2 to provide virion attachment to target host cells. This attachment induces virion internalization predominantly through clathrin-dependent endocytosis. After binding to its receptor, the capsid undergoes conformational changes. Capsid protein VP1 N-terminus (that contains an amphipathic alpha-helix) and capsid protein VP4 are externalized. Together, they shape a pore in the host membrane through which viral genome is translocated to host cell cytoplasm. Forms an icosahedral capsid of pseudo T=3 symmetry with capsid proteins VP2 and VP3. The capsid is 300 Angstroms in diameter, composed of 60 copies of each capsid protein and enclosing the viral positive strand RNA genome. Capsid protein VP2, together with VP1, interacts with host cell receptor SCARB2 to provide virion attachment to target host cells. Functionally, forms an icosahedral capsid of pseudo T=3 symmetry with capsid proteins VP2 and VP3. The capsid is 300 Angstroms in diameter, composed of 60 copies of each capsid protein and enclosing the viral positive strand RNA genome. Its function is as follows. Lies on the inner surface of the capsid shell. After binding to the host receptor, the capsid undergoes conformational changes. Capsid protein VP4 is released, Capsid protein VP1 N-terminus is externalized, and together, they shape a pore in the host membrane through which the viral genome is translocated into the host cell cytoplasm. In terms of biological role, component of immature procapsids, which is cleaved into capsid proteins VP4 and VP2 after maturation. Allows the capsid to remain inactive before the maturation step. Cysteine protease that cleaves viral polyprotein and specific host proteins. It is responsible for the autocatalytic cleavage between the P1 and P2 regions, which is the first cleavage occurring in the polyprotein. Also cleaves the host translation initiation factor EIF4G1, in order to shut down the capped cellular mRNA translation. Inhibits the host nucleus-cytoplasm protein and RNA trafficking by cleaving host members of the nuclear pores. Counteracts stress granule formation probably by antagonizing its assembly or promoting its dissassembly. Cleaves and inhibits host IFIH1/MDA5, thereby inhibiting the type-I IFN production and the establishment of the antiviral state. Cleaves and inhibits host MAVS, thereby inhibiting the type-I IFN production and the establishment of the antiviral state. Functionally, plays an essential role in the virus replication cycle by acting as a viroporin. Creates a pore in the host endoplasmic reticulum and as a consequence releases Ca2+ in the cytoplasm of infected cell. In turn, high levels of cytoplasmic calcium may trigger membrane trafficking and transport of viral ER-associated proteins to viroplasms, sites of viral genome replication. Also activates the mitochondrial apoptotic pathway by activating host BAX. Its function is as follows. Induces and associates with structural rearrangements of intracellular membranes. Displays RNA-binding, nucleotide binding and NTPase activities. May play a role in virion morphogenesis and viral RNA encapsidation by interacting with the capsid protein VP3. In terms of biological role, localizes the viral replication complex to the surface of membranous vesicles. Together with protein 3CD binds the Cis-Active RNA Element (CRE) which is involved in RNA synthesis initiation. Acts as a cofactor to stimulate the activity of 3D polymerase, maybe through a nucleid acid chaperone activity. Localizes the viral replication complex to the surface of membranous vesicles. It inhibits host cell endoplasmic reticulum-to-Golgi apparatus transport and causes the disassembly of the Golgi complex, possibly through GBF1 interaction. This would result in depletion of MHC, trail receptors and IFN receptors at the host cell surface. Plays an essential role in viral RNA replication by recruiting ACBD3 and PI4KB at the viral replication sites, thereby allowing the formation of the rearranged membranous structures where viral replication takes place. Functionally, acts as a primer for viral RNA replication and remains covalently bound to viral genomic RNA. VPg is uridylylated prior to priming replication into VPg-pUpU. The oriI viral genomic sequence may act as a template for this. The VPg-pUpU is then used as primer on the genomic RNA poly(A) by the RNA-dependent RNA polymerase to replicate the viral genome. During genome replication, the VPg-RNA linkage is removed by the host TDP2, thereby accelerating replication. During the late stage of the replication cycle, host TDP2 is excluded from sites of viral RNA synthesis and encapsidation, allowing for the generation of progeny virions. Its function is as follows. Involved in the viral replication complex and viral polypeptide maturation. It exhibits protease activity with a specificity and catalytic efficiency that is different from protease 3C. Protein 3CD lacks polymerase activity. Protein 3CD binds to the 5'UTR of the viral genome. Regulates host protein expression by interacting with host PPP1R15A to support viral replication. In terms of biological role, major viral protease that mediates proteolytic processing of the polyprotein. Cleaves host EIF5B, contributing to host translation shutoff. Also cleaves host PABPC1, contributing to host translation shutoff. Disassembles host cytoplasmic stress granules by cleaving host G3BP1, although this effect is less prononced than the inhibition induced by protease 2A. Cleaves host RIGI and thus contributes to the inhibition of type I interferon production. Cleaves host IRF7 and thus contributes to the inhibition of type I interferon production. Cleaves host HNRNPA1 thereby increasing the translation of apoptosis protease activating factor APAF1, leading to apoptosis of the host cell. Cleaves host NLRP1, triggers host N-glycine-mediated degradation of the autoinhibitory NLRP1 N-terminal fragment. Cleaves and inactivates host GSDMD, preventing GSDMD-mediated pyroptosis. Also promotes apoptosis in infected cell through cleaving of host PINX1, a telomere binding protein in order to facilitate viral release. Impairs host PML-NBs production via PML cleavage and counter its antiviral activities. Replicates the viral genomic RNA on the surface of intracellular membranes. May form linear arrays of subunits that propagate along a strong head-to-tail interaction called interface-I. Covalently attaches UMP to a tyrosine of VPg, which is used to prime RNA synthesis. The positive stranded RNA genome is first replicated at virus induced membranous vesicles, creating a dsRNA genomic replication form. This dsRNA is then used as template to synthesize positive stranded RNA genomes. ss(+)RNA genomes are either translated, replicated or encapsidated. Facilitates the assembly of NLRP3 inflammasome complex and stimulates the cleavage of host pro-CASP1 and the secretion of IL-1beta. This chain is Genome polyprotein, found in Human enterovirus 71 (strain USA/BrCr/1970) (EV71).